We begin with the raw amino-acid sequence, 255 residues long: Imidazole glycerol phosphate synthase subunit HisF (255 aa).

Active-site residues include D12 and D131.

It belongs to the HisA/HisF family. Heterodimer of HisH and HisF.

The protein resides in the cytoplasm. It carries out the reaction 5-[(5-phospho-1-deoxy-D-ribulos-1-ylimino)methylamino]-1-(5-phospho-beta-D-ribosyl)imidazole-4-carboxamide + L-glutamine = D-erythro-1-(imidazol-4-yl)glycerol 3-phosphate + 5-amino-1-(5-phospho-beta-D-ribosyl)imidazole-4-carboxamide + L-glutamate + H(+). It participates in amino-acid biosynthesis; L-histidine biosynthesis; L-histidine from 5-phospho-alpha-D-ribose 1-diphosphate: step 5/9. IGPS catalyzes the conversion of PRFAR and glutamine to IGP, AICAR and glutamate. The HisF subunit catalyzes the cyclization activity that produces IGP and AICAR from PRFAR using the ammonia provided by the HisH subunit. The chain is Imidazole glycerol phosphate synthase subunit HisF from Ruthia magnifica subsp. Calyptogena magnifica.